Reading from the N-terminus, the 92-residue chain is Protease inhibitors (92 aa).

A signal peptide spans 1–19; it reads MKFALALCAAVLLVVLVQA. Pacifastin domains are found at residues 20–54 and 57–92; these read EEKC…CQPA and EISC…CPNQ. 6 disulfide bridges follow: cysteine 23-cysteine 38, cysteine 33-cysteine 51, cysteine 36-cysteine 46, cysteine 60-cysteine 75, cysteine 70-cysteine 89, and cysteine 73-cysteine 84. O-linked (Fuc) threonine glycosylation is present at threonine 65.

Belongs to the protease inhibitor I19 family. In terms of tissue distribution, brain and fat body.

Its subcellular location is the secreted. In terms of biological role, both LCMI I and II are inhibitors of chymotrypsin and elastase (in vitro). They both inhibit the prophenol oxidase activation cascade. The sequence is that of Protease inhibitors from Locusta migratoria (Migratory locust).